Here is a 612-residue protein sequence, read N- to C-terminus: Methionine--tRNA ligase (612 aa).

The short motif at 12-22 (PYANGPRHIGH) is the 'HIGH' region element. Zn(2+) contacts are provided by Cys-144, Cys-147, Cys-157, and Cys-160. The 'KMSKS' region signature appears at 350–354 (KFSSS). Ser-353 is a binding site for ATP. A disordered region spans residues 580 to 612 (IQPGTQLSKPKPLFPKLDPELAETGPEWAPVQK).

The protein belongs to the class-I aminoacyl-tRNA synthetase family. MetG type 1 subfamily. As to quaternary structure, monomer. Zn(2+) serves as cofactor.

Its subcellular location is the cytoplasm. It catalyses the reaction tRNA(Met) + L-methionine + ATP = L-methionyl-tRNA(Met) + AMP + diphosphate. Is required not only for elongation of protein synthesis but also for the initiation of all mRNA translation through initiator tRNA(fMet) aminoacylation. The protein is Methionine--tRNA ligase of Corynebacterium jeikeium (strain K411).